A 93-amino-acid polypeptide reads, in one-letter code: Kunitz-type serine protease inhibitor 3 (93 aa).

Positions 1–24 are cleaved as a signal peptide; it reads MSSGGLLLLLGLLTLWAELTPVST. In terms of domain architecture, BPTI/Kunitz inhibitor spans 31 to 81; that stretch reads CYLPADPGRCLAYMPSFYYDSASNKCKKFIYGGCRGNANNFKTWDECRHTC. Disulfide bonds link C31/C81, C40/C64, and C56/C77. Residues 90–93 constitute a propeptide that is removed on maturation; it reads IASN.

Belongs to the venom Kunitz-type family. In terms of tissue distribution, expressed by the venom gland.

It is found in the secreted. Its function is as follows. Serine protease inhibitor that principally inhibits alpha-chymotrypsin (Ki=4.3 nM). Shows weak inhibition on trypsin (Ki=5100 nM), and plasma kallikrein. The protein is Kunitz-type serine protease inhibitor 3 of Vipera ammodytes ammodytes (Western sand viper).